A 369-amino-acid polypeptide reads, in one-letter code: tRNA/tmRNA (uracil-C(5))-methyltransferase (369 aa).

S-adenosyl-L-methionine is bound by residues Gln-192, Tyr-221, Asn-226, Glu-242, and Asp-302. Cys-327 serves as the catalytic Nucleophile. Glu-361 (proton acceptor) is an active-site residue.

It belongs to the class I-like SAM-binding methyltransferase superfamily. RNA M5U methyltransferase family. TrmA subfamily.

The catalysed reaction is uridine(54) in tRNA + S-adenosyl-L-methionine = 5-methyluridine(54) in tRNA + S-adenosyl-L-homocysteine + H(+). The enzyme catalyses uridine(341) in tmRNA + S-adenosyl-L-methionine = 5-methyluridine(341) in tmRNA + S-adenosyl-L-homocysteine + H(+). Functionally, dual-specificity methyltransferase that catalyzes the formation of 5-methyluridine at position 54 (m5U54) in all tRNAs, and that of position 341 (m5U341) in tmRNA (transfer-mRNA). This Haemophilus ducreyi (strain 35000HP / ATCC 700724) protein is tRNA/tmRNA (uracil-C(5))-methyltransferase.